Here is a 199-residue protein sequence, read N- to C-terminus: Recombination protein RecR (199 aa).

Residues 57-72 form a C4-type zinc finger; the sequence is CRSCRTFTEESHCPIC. A Toprim domain is found at 81-176; it reads EQICVVETPA…SVSRIAHGVP (96 aa).

This sequence belongs to the RecR family.

In terms of biological role, may play a role in DNA repair. It seems to be involved in an RecBC-independent recombinational process of DNA repair. It may act with RecF and RecO. This chain is Recombination protein RecR, found in Shewanella sediminis (strain HAW-EB3).